The chain runs to 253 residues: Transposase for insertion sequence element IS904 (253 aa).

In terms of domain architecture, Integrase catalytic spans 90–253 (KATAPNKVWL…SPKDFEKYNS (164 aa)).

It belongs to the transposase IS3/IS150/IS904 family.

Its function is as follows. Involved in the transposition of the insertion sequence. The sequence is that of Transposase for insertion sequence element IS904 (nisX1) from Lactococcus lactis subsp. lactis (strain IL1403) (Streptococcus lactis).